The primary structure comprises 200 residues: Cytochrome c biogenesis ATP-binding export protein CcmA (200 aa).

The 197-residue stretch at Leu3–Val199 folds into the ABC transporter domain. Residue Gly35–Thr42 coordinates ATP.

It belongs to the ABC transporter superfamily. CcmA exporter (TC 3.A.1.107) family. The complex is composed of two ATP-binding proteins (CcmA) and two transmembrane proteins (CcmB).

The protein resides in the cell inner membrane. It carries out the reaction heme b(in) + ATP + H2O = heme b(out) + ADP + phosphate + H(+). Part of the ABC transporter complex CcmAB involved in the biogenesis of c-type cytochromes; once thought to export heme, this seems not to be the case, but its exact role is uncertain. Responsible for energy coupling to the transport system. In Bradyrhizobium diazoefficiens (strain JCM 10833 / BCRC 13528 / IAM 13628 / NBRC 14792 / USDA 110), this protein is Cytochrome c biogenesis ATP-binding export protein CcmA.